The primary structure comprises 596 residues: Deuterosome assembly protein 1 (596 aa).

3 coiled-coil regions span residues 8-68 (IARN…NHEI), 130-180 (CELQ…FQKE), and 227-284 (IENL…DLLR). A compositionally biased stretch (polar residues) spans 297–306 (TANLANQKTA). Positions 297–316 (TANLANQKTAQGEEASFQVT) are disordered. Residues 337 to 402 (SEKYQAENDL…LKGAQNRQTS (66 aa)) adopt a coiled-coil conformation. Residues 447-467 (DKPQKHRSFHGENNSLKPTNY) form a disordered region. Positions 457–467 (GENNSLKPTNY) are enriched in polar residues.

Belongs to the CEP63 family.

It is found in the cytoplasm. In terms of biological role, key structural component of the deuterosome, a structure that promotes de novo centriole amplification in multiciliated cells. Deuterosome-mediated centriole amplification occurs in terminally differentiated multiciliated cells and can generate more than 100 centrioles. Probably sufficient for the specification and formation of the deuterosome inner core. This is Deuterosome assembly protein 1 from Xenopus tropicalis (Western clawed frog).